The primary structure comprises 569 residues: Dihydroxy-acid dehydratase (569 aa).

Asp80 lines the Mg(2+) pocket. Residue Cys121 participates in [2Fe-2S] cluster binding. Mg(2+) contacts are provided by Asp122 and Lys123. An N6-carboxylysine modification is found at Lys123. Cys194 lines the [2Fe-2S] cluster pocket. Glu446 is a binding site for Mg(2+). Catalysis depends on Ser472, which acts as the Proton acceptor.

Belongs to the IlvD/Edd family. Homodimer. The cofactor is [2Fe-2S] cluster. Requires Mg(2+) as cofactor.

The enzyme catalyses (2R)-2,3-dihydroxy-3-methylbutanoate = 3-methyl-2-oxobutanoate + H2O. It carries out the reaction (2R,3R)-2,3-dihydroxy-3-methylpentanoate = (S)-3-methyl-2-oxopentanoate + H2O. It functions in the pathway amino-acid biosynthesis; L-isoleucine biosynthesis; L-isoleucine from 2-oxobutanoate: step 3/4. The protein operates within amino-acid biosynthesis; L-valine biosynthesis; L-valine from pyruvate: step 3/4. Functionally, functions in the biosynthesis of branched-chain amino acids. Catalyzes the dehydration of (2R,3R)-2,3-dihydroxy-3-methylpentanoate (2,3-dihydroxy-3-methylvalerate) into 2-oxo-3-methylpentanoate (2-oxo-3-methylvalerate) and of (2R)-2,3-dihydroxy-3-methylbutanoate (2,3-dihydroxyisovalerate) into 2-oxo-3-methylbutanoate (2-oxoisovalerate), the penultimate precursor to L-isoleucine and L-valine, respectively. This chain is Dihydroxy-acid dehydratase, found in Desulforudis audaxviator (strain MP104C).